A 237-amino-acid chain; its full sequence is Phosphoribosylaminoimidazole-succinocarboxamide synthase (237 aa).

Belongs to the SAICAR synthetase family.

It catalyses the reaction 5-amino-1-(5-phospho-D-ribosyl)imidazole-4-carboxylate + L-aspartate + ATP = (2S)-2-[5-amino-1-(5-phospho-beta-D-ribosyl)imidazole-4-carboxamido]succinate + ADP + phosphate + 2 H(+). It participates in purine metabolism; IMP biosynthesis via de novo pathway; 5-amino-1-(5-phospho-D-ribosyl)imidazole-4-carboxamide from 5-amino-1-(5-phospho-D-ribosyl)imidazole-4-carboxylate: step 1/2. The sequence is that of Phosphoribosylaminoimidazole-succinocarboxamide synthase from Psychrobacter cryohalolentis (strain ATCC BAA-1226 / DSM 17306 / VKM B-2378 / K5).